We begin with the raw amino-acid sequence, 356 residues long: Epoxide hydrolase B (356 aa).

In terms of domain architecture, AB hydrolase-1 spans 28-129 (PLVVLLHGFP…RCAGVVGISV (102 aa)). Asp104 (nucleophile) is an active-site residue. The active-site Proton acceptor is the His333.

Belongs to the AB hydrolase superfamily. Epoxide hydrolase family. In terms of assembly, homodimer.

The enzyme catalyses an epoxide + H2O = an ethanediol. In terms of biological role, could be involved in detoxification of extraneous host-cell epoxides. Catalyzes the hydrolysis of small aromatic epoxide-containing substrates such as trans-1,3-diphenylpropene oxide, trans and cis-stilbene oxide, and terpenoid epoxide. The sequence is that of Epoxide hydrolase B from Mycobacterium tuberculosis (strain CDC 1551 / Oshkosh).